The sequence spans 153 residues: 6,7-dimethyl-8-ribityllumazine synthase (153 aa).

5-amino-6-(D-ribitylamino)uracil contacts are provided by residues Phe-21, Ala-55–Glu-57, and Thr-79–Ile-81. Residue Ala-84–Thr-85 participates in (2S)-2-hydroxy-3-oxobutyl phosphate binding. His-87 acts as the Proton donor in catalysis. Phe-112 is a binding site for 5-amino-6-(D-ribitylamino)uracil. (2S)-2-hydroxy-3-oxobutyl phosphate is bound at residue Arg-126.

The protein belongs to the DMRL synthase family. Forms an icosahedral capsid composed of 60 subunits, arranged as a dodecamer of pentamers.

It catalyses the reaction (2S)-2-hydroxy-3-oxobutyl phosphate + 5-amino-6-(D-ribitylamino)uracil = 6,7-dimethyl-8-(1-D-ribityl)lumazine + phosphate + 2 H2O + H(+). Its pathway is cofactor biosynthesis; riboflavin biosynthesis; riboflavin from 2-hydroxy-3-oxobutyl phosphate and 5-amino-6-(D-ribitylamino)uracil: step 1/2. Catalyzes the formation of 6,7-dimethyl-8-ribityllumazine by condensation of 5-amino-6-(D-ribitylamino)uracil with 3,4-dihydroxy-2-butanone 4-phosphate. This is the penultimate step in the biosynthesis of riboflavin. This is 6,7-dimethyl-8-ribityllumazine synthase from Bacillus cereus (strain 03BB102).